Here is a 192-residue protein sequence, read N- to C-terminus: Fe/S biogenesis protein NfuA (192 aa).

Residues cysteine 149 and cysteine 152 each coordinate [4Fe-4S] cluster.

The protein belongs to the NfuA family. In terms of assembly, homodimer. It depends on [4Fe-4S] cluster as a cofactor.

In terms of biological role, involved in iron-sulfur cluster biogenesis. Binds a 4Fe-4S cluster, can transfer this cluster to apoproteins, and thereby intervenes in the maturation of Fe/S proteins. Could also act as a scaffold/chaperone for damaged Fe/S proteins. In Shewanella piezotolerans (strain WP3 / JCM 13877), this protein is Fe/S biogenesis protein NfuA.